A 613-amino-acid chain; its full sequence is Cleavage and polyadenylation specificity factor subunit 3-II (613 aa).

The HXHXDH motif motif lies at 67–72 (HFHMDH).

This sequence belongs to the metallo-beta-lactamase superfamily. RNA-metabolizing metallo-beta-lactamase-like family. INTS11 subfamily. As to quaternary structure, component of the CPSF complex, at least composed of CPSF160, CPSF100, CPSF73-I, CPSF73-II, CPSF30, FY and FIPS5. Interacts with CPSF30, CPSF100, CPSF160 and FY. Highly expressed in senescence leaves, petals, stamens, pollen and late stages of siliques with seeds. Also detected in roots, stems, leaves and seedlings.

It localises to the nucleus. In terms of biological role, component of the cleavage and polyadenylation specificity factor (CPSF) complex that play a key role in pre-mRNA 3'-end formation, recognizing the AAUAAA signal sequence and interacting with poly(A) polymerase and other factors to bring about cleavage and poly(A) addition. May function as mRNA 3'-end-processing endonuclease and also be involved in the histone 3'-end pre-mRNA processing. The sequence is that of Cleavage and polyadenylation specificity factor subunit 3-II (CPSF73-II) from Arabidopsis thaliana (Mouse-ear cress).